Reading from the N-terminus, the 386-residue chain is Diaminopimelate decarboxylase (386 aa).

The residue at position 49 (lysine 49) is an N6-(pyridoxal phosphate)lysine. Pyridoxal 5'-phosphate is bound by residues glycine 228 and 266-269 (ELGR). 5 residues coordinate substrate: arginine 269, arginine 305, tyrosine 309, glutamate 335, and tyrosine 363. Position 363 (tyrosine 363) interacts with pyridoxal 5'-phosphate.

It belongs to the Orn/Lys/Arg decarboxylase class-II family. LysA subfamily. Homodimer. Pyridoxal 5'-phosphate is required as a cofactor.

The catalysed reaction is meso-2,6-diaminopimelate + H(+) = L-lysine + CO2. It participates in amino-acid biosynthesis; L-lysine biosynthesis via DAP pathway; L-lysine from DL-2,6-diaminopimelate: step 1/1. Its function is as follows. Specifically catalyzes the decarboxylation of meso-diaminopimelate (meso-DAP) to L-lysine. The protein is Diaminopimelate decarboxylase of Bacteroides thetaiotaomicron (strain ATCC 29148 / DSM 2079 / JCM 5827 / CCUG 10774 / NCTC 10582 / VPI-5482 / E50).